The following is a 994-amino-acid chain: Sarcoplasmic/endoplasmic reticulum calcium ATPase 1 (994 aa).

The Cytoplasmic segment spans residues 1 to 48 (MENAHAKTAEECLAFFGVNESVGLSGEQVRRALEKYGHNELPAEEGKT). A helical transmembrane segment spans residues 49 to 69 (IWELVVEQFEDLLVRILLLAA). Topologically, residues 70-89 (CISFVLAWFEEGEETITAFV) are lumenal. A helical membrane pass occupies residues 90 to 110 (EPFVILLILIANAVVGVWQER). Over 111 to 253 (NAENAIEALK…QDKTPLQQKL (143 aa)) the chain is Cytoplasmic. A helical transmembrane segment spans residues 254–273 (DEFGEQLSKVISLICVAVWL). Residues 274–295 (INIGHFNDPVHGGSWIRGAIYY) are Lumenal-facing. A helical membrane pass occupies residues 296 to 313 (FKIAVALAVAAIPEGLPA). Residues valine 304, alanine 305, isoleucine 307, and glutamate 309 each contribute to the Ca(2+) site. Over 314–757 (VITTCLALGT…EEGRAIYNNM (444 aa)) the chain is Cytoplasmic. Aspartate 351 (4-aspartylphosphate intermediate) is an active-site residue. 2 residues coordinate Mg(2+): aspartate 351 and threonine 353. ATP contacts are provided by threonine 353, glutamate 442, arginine 489, lysine 515, arginine 560, threonine 625, glycine 626, aspartate 627, arginine 678, and lysine 684. Residue aspartate 703 participates in Mg(2+) binding. Asparagine 706 is a binding site for ATP. Residues 758–777 (KQFIRYLISSNVGEVVCIFL) form a helical membrane-spanning segment. Residues asparagine 768 and glutamate 771 each coordinate Ca(2+). Residues 778–787 (TAALGLPEAL) lie on the Lumenal side of the membrane. The chain crosses the membrane as a helical span at residues 788–808 (IPVQLLWVNLVTDGLPATALG). Residues 788–808 (IPVQLLWVNLVTDGLPATALG) are interaction with PLN. The Ca(2+) site is built by asparagine 796, threonine 799, and aspartate 800. Residues 809-828 (FNPPDLDIMDKPPRSPKEPL) are Cytoplasmic-facing. A helical transmembrane segment spans residues 829–851 (ISGWLFFRYLAIGGYVGAATVGA). The Lumenal segment spans residues 852 to 897 (AAWWFLYAEDGPSLTYHQLTHFMQCTHHNAEFEGVDCDIFESPVPM). Cysteines 876 and 888 form a disulfide. The helical transmembrane segment at 898–917 (TMALSVLVTIEMCNALNSLS) threads the bilayer. Glutamate 908 contributes to the Ca(2+) binding site. Residues 918 to 930 (ENQSLLRMPPWVN) are Cytoplasmic-facing. The chain crosses the membrane as a helical span at residues 931-949 (IWLVGSICLSMSLHFVILY). The segment at 932–943 (WLVGSICLSMSL) is interaction with PLN. Over 950–964 (VDPLPMIFKLTHLDL) the chain is Lumenal. The helical transmembrane segment at 965–985 (AHWLVVLRISFPVILLDEALK) threads the bilayer. The Cytoplasmic segment spans residues 986–994 (FVARNYLEA).

It belongs to the cation transport ATPase (P-type) (TC 3.A.3) family. Type IIA subfamily. Interacts with sarcolipin (SLN). Interacts with phospholamban (PLN). Interacts with myoregulin (MRLN). Interacts with DWORF. Mg(2+) is required as a cofactor.

Its subcellular location is the endoplasmic reticulum membrane. It is found in the sarcoplasmic reticulum membrane. The enzyme catalyses Ca(2+)(in) + ATP + H2O = Ca(2+)(out) + ADP + phosphate + H(+). Its activity is regulated as follows. Inhibited by sarcolipin (SLN) and myoregulin (MRLN). Also shown to be inhibited by phospholamban (PLN) in vitro. Enhanced by DWORF; DWORF increases activity by displacing sarcolipin (SLN), phospholamban (PLN) and myoregulin (MRLN). In terms of biological role, key regulator of striated muscle performance by acting as the major Ca(2+) ATPase responsible for the reuptake of cytosolic Ca(2+) into the sarcoplasmic reticulum. Catalyzes the hydrolysis of ATP coupled with the translocation of calcium from the cytosol to the sarcoplasmic reticulum lumen. Contributes to calcium sequestration involved in muscular excitation/contraction. The polypeptide is Sarcoplasmic/endoplasmic reticulum calcium ATPase 1 (ATP2A1) (Gallus gallus (Chicken)).